A 388-amino-acid chain; its full sequence is Succinate--CoA ligase [ADP-forming] subunit beta (388 aa).

Positions 9-244 (KEIFRSMGVA…LEEEDPKEIE (236 aa)) constitute an ATP-grasp domain. ATP-binding positions include Lys46, 53 to 55 (GRG), Glu99, Cys102, and Glu107. Asn199 and Asp213 together coordinate Mg(2+). Substrate-binding positions include Asn264 and 321–323 (GIM).

Belongs to the succinate/malate CoA ligase beta subunit family. In terms of assembly, heterotetramer of two alpha and two beta subunits. Mg(2+) serves as cofactor.

The catalysed reaction is succinate + ATP + CoA = succinyl-CoA + ADP + phosphate. It carries out the reaction GTP + succinate + CoA = succinyl-CoA + GDP + phosphate. Its pathway is carbohydrate metabolism; tricarboxylic acid cycle; succinate from succinyl-CoA (ligase route): step 1/1. In terms of biological role, succinyl-CoA synthetase functions in the citric acid cycle (TCA), coupling the hydrolysis of succinyl-CoA to the synthesis of either ATP or GTP and thus represents the only step of substrate-level phosphorylation in the TCA. The beta subunit provides nucleotide specificity of the enzyme and binds the substrate succinate, while the binding sites for coenzyme A and phosphate are found in the alpha subunit. This is Succinate--CoA ligase [ADP-forming] subunit beta from Staphylococcus haemolyticus (strain JCSC1435).